The primary structure comprises 151 residues: MKTKTCKNLISNEQIQEVQEVYDTFKCRNGEMDKINIQYGFRALGVRLGEEEVEKIFKNQQYINFNSFLDIVTPLIYKIDVYASFEQAFSLFDRDGSGYITFDDLKTVAINLGEARSDSKLYNMIKRADLNGDKKISKIEFIQLLYWKKIY.

2 consecutive EF-hand domains span residues 80–115 and 116–151; these read DVYA…LGEA and RSDS…KKIY. Positions 93, 95, 97, 99, 104, 129, 131, 133, 135, and 140 each coordinate Ca(2+).

The protein belongs to the centrin family.

The protein resides in the cytoplasm. Its subcellular location is the cytoskeleton. It is found in the microtubule organizing center. It localises to the centrosome. The protein localises to the nucleus. Its function is as follows. Plays a fundamental role in microtubule-organizing center structure and function. This chain is Centrin-A (cenA), found in Dictyostelium discoideum (Social amoeba).